The following is a 275-amino-acid chain: Acetyl-coenzyme A carboxylase carboxyl transferase subunit beta (275 aa).

The CoA carboxyltransferase N-terminal domain occupies 18-275 (KDNAGPAVPS…IHRLGGEMHA (258 aa)). The disordered stretch occupies residues 23 to 47 (PAVPSNTHSSKSNGNPVSEMKENKR). Residues 26–38 (PSNTHSSKSNGNP) are compositionally biased toward polar residues.

This sequence belongs to the AccD/PCCB family. Acetyl-CoA carboxylase is a heterohexamer composed of biotin carboxyl carrier protein (AccB), biotin carboxylase (AccC) and two subunits each of ACCase subunit alpha (AccA) and ACCase subunit beta (AccD).

Its subcellular location is the cytoplasm. It carries out the reaction N(6)-carboxybiotinyl-L-lysyl-[protein] + acetyl-CoA = N(6)-biotinyl-L-lysyl-[protein] + malonyl-CoA. The protein operates within lipid metabolism; malonyl-CoA biosynthesis; malonyl-CoA from acetyl-CoA: step 1/1. Component of the acetyl coenzyme A carboxylase (ACC) complex. Biotin carboxylase (BC) catalyzes the carboxylation of biotin on its carrier protein (BCCP) and then the CO(2) group is transferred by the transcarboxylase to acetyl-CoA to form malonyl-CoA. The polypeptide is Acetyl-coenzyme A carboxylase carboxyl transferase subunit beta (Alkaliphilus oremlandii (strain OhILAs) (Clostridium oremlandii (strain OhILAs))).